The chain runs to 349 residues: N-lysine methyltransferase KMT5A (349 aa).

The disordered stretch occupies residues 18–46 (AAVAATAPGPEMVEQRGPGRPRSDGENVF). Serine 57 carries the phosphoserine modification. The tract at residues 65 to 207 (RSPLQEENSV…SEERKKNELI (143 aa)) is disordered. Residues 107 to 119 (VKSDEQKSKDTRR) are compositionally biased toward basic and acidic residues. At threonine 138 the chain carries Phosphothreonine. The segment covering 154 to 170 (ALKKSLKGKQAPRKKSQ) has biased composition (basic residues). The span at 192 to 207 (SKAELQSEERKKNELI) shows a compositional bias: basic and acidic residues. Residues 213 to 334 (EGMKIDLIDG…AGEELLYDYG (122 aa)) enclose the SET domain. Residues 223 to 225 (KGR), tyrosine 268, and 295 to 296 (NH) each bind S-adenosyl-L-methionine.

It belongs to the class V-like SAM-binding methyltransferase superfamily. Histone-lysine methyltransferase family. PR/SET subfamily. In terms of assembly, interacts with L3MBTL1. Interacts with SIRT2 (phosphorylated form); the interaction is direct, stimulates KMT5A-mediated methyltransferase activity at histone H4 'Lys-20' (H4K20me1) and is increased in a H(2)O(2)-induced oxidative stress-dependent manner. Ubiquitinated and degraded by the DCX(DTL) complex.

The protein resides in the nucleus. It localises to the chromosome. The catalysed reaction is L-lysyl(20)-[histone H4] + S-adenosyl-L-methionine = N(6)-methyl-L-lysyl(20)-[histone H4] + S-adenosyl-L-homocysteine + H(+). It catalyses the reaction L-lysyl-[protein] + S-adenosyl-L-methionine = N(6)-methyl-L-lysyl-[protein] + S-adenosyl-L-homocysteine + H(+). Functionally, protein-lysine N-methyltransferase that monomethylates both histones and non-histone proteins. Specifically monomethylates 'Lys-20' of histone H4 (H4K20me1). H4K20me1 is enriched during mitosis and represents a specific tag for epigenetic transcriptional repression. Mainly functions in euchromatin regions, thereby playing a central role in the silencing of euchromatic genes. Required for cell proliferation, probably by contributing to the maintenance of proper higher-order structure of DNA during mitosis. Involved in chromosome condensation and proper cytokinesis. Nucleosomes are preferred as substrate compared to free histones. Mediates monomethylation of p53/TP53 at 'Lys-382', leading to repress p53/TP53-target genes. Plays a negative role in TGF-beta response regulation and a positive role in cell migration. This Mus musculus (Mouse) protein is N-lysine methyltransferase KMT5A.